Reading from the N-terminus, the 393-residue chain is NAD(P)H-quinone oxidoreductase subunit H, chloroplastic (393 aa).

It belongs to the complex I 49 kDa subunit family. NDH is composed of at least 16 different subunits, 5 of which are encoded in the nucleus.

It is found in the plastid. It localises to the chloroplast thylakoid membrane. It carries out the reaction a plastoquinone + NADH + (n+1) H(+)(in) = a plastoquinol + NAD(+) + n H(+)(out). The enzyme catalyses a plastoquinone + NADPH + (n+1) H(+)(in) = a plastoquinol + NADP(+) + n H(+)(out). Its function is as follows. NDH shuttles electrons from NAD(P)H:plastoquinone, via FMN and iron-sulfur (Fe-S) centers, to quinones in the photosynthetic chain and possibly in a chloroplast respiratory chain. The immediate electron acceptor for the enzyme in this species is believed to be plastoquinone. Couples the redox reaction to proton translocation, and thus conserves the redox energy in a proton gradient. This chain is NAD(P)H-quinone oxidoreductase subunit H, chloroplastic, found in Arabis hirsuta (Hairy rock-cress).